A 193-amino-acid chain; its full sequence is Oligoribonuclease (193 aa).

Residues 8-171 (LVWLDLEMTG…EDIRESVAEL (164 aa)) form the Exonuclease domain. Tyr129 is an active-site residue.

This sequence belongs to the oligoribonuclease family.

Its subcellular location is the cytoplasm. 3'-to-5' exoribonuclease specific for small oligoribonucleotides. This chain is Oligoribonuclease, found in Alkalilimnicola ehrlichii (strain ATCC BAA-1101 / DSM 17681 / MLHE-1).